A 317-amino-acid chain; its full sequence is Cold tolerance protein 1 (317 aa).

Belongs to the CTO1 family.

Protein required for cold tolerance. Plays a role in the regulation of phosphate uptake. This Saccharomyces cerevisiae (strain ATCC 204508 / S288c) (Baker's yeast) protein is Cold tolerance protein 1.